The primary structure comprises 146 residues: UPF0178 protein LMOf2365_1475 (146 aa).

It belongs to the UPF0178 family.

The protein is UPF0178 protein LMOf2365_1475 of Listeria monocytogenes serotype 4b (strain F2365).